The chain runs to 424 residues: Serine--tRNA ligase (424 aa).

An L-serine-binding site is contributed by 229–231 (TAE). Position 260-262 (260-262 (RSE)) interacts with ATP. Residue Glu-283 participates in L-serine binding. 347–350 (EISS) serves as a coordination point for ATP. L-serine is bound at residue Ser-383.

Belongs to the class-II aminoacyl-tRNA synthetase family. Type-1 seryl-tRNA synthetase subfamily. As to quaternary structure, homodimer. The tRNA molecule binds across the dimer.

It localises to the cytoplasm. It catalyses the reaction tRNA(Ser) + L-serine + ATP = L-seryl-tRNA(Ser) + AMP + diphosphate + H(+). The catalysed reaction is tRNA(Sec) + L-serine + ATP = L-seryl-tRNA(Sec) + AMP + diphosphate + H(+). It functions in the pathway aminoacyl-tRNA biosynthesis; selenocysteinyl-tRNA(Sec) biosynthesis; L-seryl-tRNA(Sec) from L-serine and tRNA(Sec): step 1/1. Its function is as follows. Catalyzes the attachment of serine to tRNA(Ser). Is also able to aminoacylate tRNA(Sec) with serine, to form the misacylated tRNA L-seryl-tRNA(Sec), which will be further converted into selenocysteinyl-tRNA(Sec). The protein is Serine--tRNA ligase of Gluconacetobacter diazotrophicus (strain ATCC 49037 / DSM 5601 / CCUG 37298 / CIP 103539 / LMG 7603 / PAl5).